Reading from the N-terminus, the 395-residue chain is MDLCQKNETDLENAENNEIQFTEETEPTYTCPDGKSEKNHVYCLLDVSDITLEQDEKAKEFIIGTGWEEAVQGWGRTSPAACIWPRKIPKKARVGEGACSDCLVCVNLSHWSLQTKPPTEGGPEKDQSSPSQTQAAPQGPSTASRAISDICFPTYFRAEKKSLQIKEFIWCNKDWAIPGTNRGKASGNPSGGAHRGLSIPGPLTSRALLVLPPLKASLSNALDVLGKKSKNSFLQSEEKVLDVEKDGCVAYAYGLKTADGKGEKRASELAKHPMVNDTPSSPSPAAQISLLTDPEQRCLHWSLLSEKNLACPPDPSNVRYLAALQLLQKRGVQSYKSKFKAKEPRSPVITRKHVLPKAKQENRPQMLETKVFPRPVLPSLTVSRVIIPVSTHRIL.

The interval 115–144 is disordered; that stretch reads TKPPTEGGPEKDQSSPSQTQAAPQGPSTAS. Low complexity predominate over residues 128–141; that stretch reads SSPSQTQAAPQGPS.

This is an uncharacterized protein from Homo sapiens (Human).